The following is a 147-amino-acid chain: uncharacterized protein (147 aa).

The 104-residue stretch at 44–147 (LVGYIDKEIH…LKSIKERLSI (104 aa)) folds into the HTH LytTR-type domain.

The protein resides in the cytoplasm. This is an uncharacterized protein from Staphylococcus aureus (strain Mu50 / ATCC 700699).